Reading from the N-terminus, the 397-residue chain is Acylalkylpyrone synthase csyB (397 aa).

Residues Lys-50 and 50–57 (KMLEINRK) each bind CoA. The active-site Nucleophile is Cys-155. 214–215 (GD) contacts substrate. Residues Ile-267, Gly-312, 312 to 315 (GGYA), Tyr-314, and Ala-315 each bind CoA. His-377 is a catalytic residue.

This sequence belongs to the thiolase-like superfamily. Chalcone/stilbene synthases family. As to quaternary structure, homodimer.

Its function is as follows. Acylalkylpyrone synthase that catalyzes not only the polyketide chain elongation but also the one-pot condensation of two beta-ketoacyl units to produce the 3-acyl-4-hydroxy-6-alkyl-alpha-pyrone (AcAP) scaffold, a precursor of csypyrone B. The enzyme reaction is initiated by the loading of acetoacetyl-CoA onto Cys-155, and subsequent thioester bond cleavage by the nucleophilic water generates the beta-keto acid intermediate, which is placed within a pocket. The second beta-ketoacyl unit is then produced by polyketide chain elongation of fatty acyl-CoA with one molecule of malonyl-CoA, and the condensation with the beta-ketoacid generates the final products. Csypyrone B1 is the major product and contains a propanoic acid side-chain, whereas csypyrones B2 and B3 are minor compounds that contain butyric or pentanoic acid side-chains, respectively. This Aspergillus oryzae (strain ATCC 42149 / RIB 40) (Yellow koji mold) protein is Acylalkylpyrone synthase csyB.